The primary structure comprises 391 residues: NADH-quinone oxidoreductase subunit D (391 aa).

It belongs to the complex I 49 kDa subunit family. In terms of assembly, NDH-1 is composed of 14 different subunits. Subunits NuoB, C, D, E, F, and G constitute the peripheral sector of the complex.

The protein resides in the cell inner membrane. The enzyme catalyses a quinone + NADH + 5 H(+)(in) = a quinol + NAD(+) + 4 H(+)(out). Its function is as follows. NDH-1 shuttles electrons from NADH, via FMN and iron-sulfur (Fe-S) centers, to quinones in the respiratory chain. The immediate electron acceptor for the enzyme in this species is believed to be ubiquinone. Couples the redox reaction to proton translocation (for every two electrons transferred, four hydrogen ions are translocated across the cytoplasmic membrane), and thus conserves the redox energy in a proton gradient. In Rickettsia massiliae (strain Mtu5), this protein is NADH-quinone oxidoreductase subunit D.